We begin with the raw amino-acid sequence, 244 residues long: Inner kinetochore subunit fta7 (244 aa).

The protein belongs to the CENP-Q/OKP1 family. Component of the heterotetrameric kinetochore subcomplex COMA, which consists of fta2, fta7, mal2 and mis17. The COMA subcomplex is part of a larger constitutive centromere-associated network (CCAN) (also known as central kinetochore Sim4 complex in fission yeast), which is composed of at least cnl2, cnp3, cnp20, fta1, fta2, fta3, fta4, fta6, fta7, mal2, mhf1, mhf2, mis6, mis15, mis17, sim4 and wip1.

It is found in the nucleus. The protein resides in the chromosome. The protein localises to the centromere. It localises to the kinetochore. Its subcellular location is the cytoplasm. It is found in the cytoskeleton. The protein resides in the microtubule organizing center. The protein localises to the spindle pole body. In terms of biological role, component of the kinetochore, a multiprotein complex that assembles on centromeric DNA and attaches chromosomes to spindle microtubules, mediating chromosome segregation and sister chromatid segregation during meiosis and mitosis. Component of the inner kinetochore COMA complex, which connects centromere-associated proteins and the outer kinetochore. COMA interacts with other inner kinetochore proteins to form the inner kinetochore constitutive centromere-associated network (CCAN), which serves as a structural platform for outer kinetochore assembly. The protein is Inner kinetochore subunit fta7 (fta7) of Schizosaccharomyces pombe (strain 972 / ATCC 24843) (Fission yeast).